Reading from the N-terminus, the 398-residue chain is Na(+)/H(+) antiporter NhaA (398 aa).

The next 11 helical transmembrane spans lie at Ile-19–Gly-39, Leu-64–Leu-84, Ile-99–Ala-119, Gly-130–Gly-150, Ile-159–Phe-179, Asn-182–Val-202, Ile-222–Ile-242, Ala-266–Ile-286, Ile-299–Val-319, Gly-337–Phe-357, and Leu-370–Thr-390.

It belongs to the NhaA Na(+)/H(+) (TC 2.A.33) antiporter family.

The protein resides in the cell inner membrane. It carries out the reaction Na(+)(in) + 2 H(+)(out) = Na(+)(out) + 2 H(+)(in). Functionally, na(+)/H(+) antiporter that extrudes sodium in exchange for external protons. This is Na(+)/H(+) antiporter NhaA from Desulfotalea psychrophila (strain LSv54 / DSM 12343).